Here is a 103-residue protein sequence, read N- to C-terminus: Defensin-like protein 289 (103 aa).

Positions 1–29 (MATLKTTIFIIFILYISCTMFVNIFRVQA) are cleaved as a signal peptide. Intrachain disulfides connect cysteine 33/cysteine 50, cysteine 39/cysteine 55, cysteine 43/cysteine 57, cysteine 72/cysteine 92, cysteine 78/cysteine 98, and cysteine 84/cysteine 100.

It belongs to the DEFL family.

Its subcellular location is the secreted. The chain is Defensin-like protein 289 from Arabidopsis thaliana (Mouse-ear cress).